Consider the following 185-residue polypeptide: Ribosome-recycling factor (185 aa).

It belongs to the RRF family.

The protein resides in the cytoplasm. Responsible for the release of ribosomes from messenger RNA at the termination of protein biosynthesis. May increase the efficiency of translation by recycling ribosomes from one round of translation to another. The polypeptide is Ribosome-recycling factor (Azotobacter vinelandii (strain DJ / ATCC BAA-1303)).